The chain runs to 1177 residues: Phospholipid-transporting ATPase IF (1177 aa).

Residues 1-55 (MWRWIRQQLGFDPPHQSDTRTIYVANRFPQNGLYTPQKFIDNRIISSKYTVWNFV) lie on the Cytoplasmic side of the membrane. The helical transmembrane segment at 56 to 77 (PKNLFEQFRRVANFYFLIIFLV) threads the bilayer. Topologically, residues 78 to 82 (QLMID) are extracellular. A helical transmembrane segment spans residues 83 to 104 (TPTSPVTSGLPLFFVITVTAIK). Topologically, residues 105–289 (QGYEDWLRHN…SAVEKSMNTF (185 aa)) are cytoplasmic. The chain crosses the membrane as a helical span at residues 290–311 (LIIYLVILISEAVISTILKYTW). Over 312-341 (QAEEKWDEPWYNQKTEHQRNSSKILRFISD) the chain is Extracellular. The helical transmembrane segment at 342-359 (FLAFLVLYNFIIPISLYV) threads the bilayer. The Cytoplasmic segment spans residues 360–876 (TVEMQKFLGS…HGHFYYIRIA (517 aa)). Asp-407 functions as the 4-aspartylphosphate intermediate in the catalytic mechanism. Residues Asp-407, Lys-408, Thr-409, Glu-531, Phe-572, Lys-595, Arg-626, Thr-706, Gly-707, Asp-708, Arg-794, and Lys-800 each coordinate ATP. Position 407 (Asp-407) interacts with Mg(2+). Residue Thr-409 participates in Mg(2+) binding. Mg(2+) is bound at residue Asp-821. Residues Asn-824 and Asp-825 each coordinate ATP. Asp-825 is a binding site for Mg(2+). A helical membrane pass occupies residues 877 to 898 (TLVQYFFYKNVCFITPQFLYQF). Residues 899-910 (YCLFSQQTLYDS) lie on the Extracellular side of the membrane. Residues 911-930 (VYLTLYNICFTSLPILIYSL) form a helical membrane-spanning segment. Residues 931–960 (LEQHVDPHVLQNKPTLYRDISKNRLLSIKT) lie on the Cytoplasmic side of the membrane. A helical membrane pass occupies residues 961–982 (FLYWTILGFSHAFIFFFGSYLL). The Extracellular segment spans residues 983–997 (IGKDTSLLGNGQMFG). Residues 998–1020 (NWTFGTLVFTVMVITVTVKMALE) form a helical membrane-spanning segment. Residues 1021–1025 (THFWT) are Cytoplasmic-facing. The helical transmembrane segment at 1026 to 1047 (WINHLVTWGSIIFYFVFSLFYG) threads the bilayer. Residues 1048 to 1065 (GILWPFLGSQNMYFVFIQ) are Extracellular-facing. Residues 1066–1090 (LLSSGSAWFAIILMVVTCLFLDIIK) form a helical membrane-spanning segment. At 1091 to 1177 (KVFDRHLHPT…TLSTMDSSTC (87 aa)) the chain is on the cytoplasmic side. Ser-1154 bears the Phosphoserine mark.

The protein belongs to the cation transport ATPase (P-type) (TC 3.A.3) family. Type IV subfamily. Component of a P4-ATPase flippase complex which consists of a catalytic alpha subunit ATP11B and an accessory beta subunit TMEM30A. Mg(2+) serves as cofactor.

It is found in the recycling endosome membrane. It localises to the early endosome. Its subcellular location is the endoplasmic reticulum. The protein localises to the golgi apparatus. The protein resides in the trans-Golgi network. The enzyme catalyses ATP + H2O + phospholipidSide 1 = ADP + phosphate + phospholipidSide 2.. It carries out the reaction a 1,2-diacyl-sn-glycero-3-phospho-L-serine(out) + ATP + H2O = a 1,2-diacyl-sn-glycero-3-phospho-L-serine(in) + ADP + phosphate + H(+). The catalysed reaction is a 1,2-diacyl-sn-glycero-3-phosphoethanolamine(out) + ATP + H2O = a 1,2-diacyl-sn-glycero-3-phosphoethanolamine(in) + ADP + phosphate + H(+). With respect to regulation, the ATPase activity is up-regulated by aminophospholipids PS and PE. Functionally, catalytic component of a P4-ATPase flippase complex which catalyzes the hydrolysis of ATP coupled to the transport of aminophospholipids, phosphatidylserines (PS) and phosphatidylethanolamines (PE), from the outer to the inner leaflet of intracellular membranes. May contribute to the maintenance of membrane lipid asymmetry in endosome compartment. The sequence is that of Phospholipid-transporting ATPase IF (ATP11B) from Homo sapiens (Human).